A 430-amino-acid polypeptide reads, in one-letter code: Trigger factor (430 aa).

One can recognise a PPIase FKBP-type domain in the interval 157–242 (GDLVALETWS…AVEVSEPVLP (86 aa)).

It belongs to the FKBP-type PPIase family. Tig subfamily.

The protein resides in the cytoplasm. It carries out the reaction [protein]-peptidylproline (omega=180) = [protein]-peptidylproline (omega=0). Its function is as follows. Involved in protein export. Acts as a chaperone by maintaining the newly synthesized protein in an open conformation. Functions as a peptidyl-prolyl cis-trans isomerase. The polypeptide is Trigger factor (Xanthomonas oryzae pv. oryzae (strain MAFF 311018)).